A 153-amino-acid polypeptide reads, in one-letter code: ORM1-like protein 3 (153 aa).

Positions 1–17 (MNVGTAHSEVNPNTRVM) are important for ceramide level-sensing. Over 1–21 (MNVGTAHSEVNPNTRVMNSRG) the chain is Cytoplasmic. Transmembrane regions (helical) follow at residues 22–44 (IWLS…PFVS) and 45–63 (VPVV…MYIF). Residues 64-100 (LHTVKGTPFETPDQGKARLLTHWEQMDYGVQFTASRK) are Cytoplasmic-facing. Residues 101 to 117 (FLTITPIVLYFLTSFYT) traverse the membrane as a helical segment. The Lumenal segment spans residues 118-121 (KYDQ). Residues 122–139 (IHFVLNTVSLMSVLIPKL) form a helical membrane-spanning segment. Proline 137 is subject to Hydroxyproline. Topologically, residues 140–153 (PQLHGVRIFGINKY) are cytoplasmic.

The protein belongs to the ORM family. As to quaternary structure, ceramide-sensitive subunit of the serine palmitoyltransferase (SPT) complex, which is also composed of SPTLC1, SPTLC2/3 and SPTSSA/B. Post-translationally, when hydroxylated at Pro-137, ubiquitinated via 'Lys-48'-linkage, leading to proteasomal degradation. In endothelial cells, ORMDL3 proteasomal degradation is controlled by the sphingosine 1-phosphate receptor signaling pathway. As to expression, widely expressed. Expressed in adult and fetal heart, brain, lung, liver, skeletal muscle and kidney. Expressed in adult pancreas and placenta and in fetal spleen and thymus.

Its subcellular location is the endoplasmic reticulum membrane. Plays an essential role in the homeostatic regulation of sphingolipid de novo biosynthesis by modulating the activity of the serine palmitoyltransferase (SPT) in response to ceramide levels. When complexed to SPT, the binding of ceramides to its N-terminus stabilizes a conformation that block SPT substrate entry, hence preventing SPT catalytic activity. Through this mechanism, maintains ceramide levels at sufficient concentrations for the production of complex sphingolipids, but which prevents the accumulation of ceramides to levels that trigger apoptosis. In Homo sapiens (Human), this protein is ORM1-like protein 3 (ORMDL3).